The chain runs to 798 residues: ATP-dependent RNA helicase bel (798 aa).

Residues 16–248 are disordered; sequence VAGLDLNGGS…SRWKEGGGSN (233 aa). Over residues 31-42 the composition is skewed to polar residues; it reads PITSKTSTNSVT. Composition is skewed to gly residues over residues 94-110, 118-132, and 154-178; these read RGGG…GGRG, YGYG…GGGG, and SGGG…GGSG. Phosphoserine is present on residues S177 and S179. Over residues 198–209 the composition is skewed to basic and acidic residues; sequence RNDRWQEPERPA. Phosphoserine occurs at positions 214 and 219. A Q motif motif is present at residues 295–323; the sequence is TSFDDVQLTEIIRNNVALARYDKPTPVQK. Residues 315–322 and 339–346 each bind ATP; these read YDKPTPVQ and AQTGSGKT. The Helicase ATP-binding domain maps to 326–515; the sequence is IPIIINGRDL…SDFLSNYIFL (190 aa). Positions 459-462 match the DEAD box motif; that stretch reads DEAD. A Helicase C-terminal domain is found at 542-693; it reads YLLDLLSSIR…EIPSFMEDMS (152 aa). Phosphoserine is present on S638. 2 disordered regions span residues 689-765 and 778-798; these read MEDM…SGGG and GGSY…WWAQ. Composition is skewed to gly residues over residues 706 to 717 and 740 to 750; these read RGGGGRYGGGFG and GGSGSGGGGGS.

It belongs to the DEAD box helicase family. DDX3/DED1 subfamily. In terms of tissue distribution, vas and bel colocalize in nuage (perinuclear, electron-dense granules in germline cells) and at the oocyte posterior during oogenesis.

The protein localises to the cytoplasm. It catalyses the reaction ATP + H2O = ADP + phosphate + H(+). Functionally, ATP-dependent RNA helicase that is essential and required for cellular function, larval growth, and for male and female fertility. Also required for RNA interference (RNAi), double-stranded RNA induces potent and specific gene silencing, by acting downstream of dsRNA internalization. RNAi is mediated by the RNA-induced silencing complex (RISC), a sequence-specific, multicomponent nuclease that destroys or silences messenger RNAs homologous to the silencing trigger. This Drosophila melanogaster (Fruit fly) protein is ATP-dependent RNA helicase bel.